The sequence spans 265 residues: MNYSNNYIEHQNKKKTIIIFFRQFKKQKPMLRMGVHLVVINKNTFNFFNRQNNYFNSGKTKKIFVIDRFLAVHQIVRKKLQLVGVTALLLACKYEEVSVPVVDDLILISDKAYSRREVLDMEKLMANTLQFNFSLPTPYVFMKRFLKAAQSDKKLEILSFFMIELCLVEYEMLEYLPSKLAASAIYTAQCTLKGFEEWSKTCEFHTGYNEEQLLACARKMVAFHHKAGTGKLTGSTTHLSSFMLQEVNQLGFCFKGGKNYNKNLI.

Belongs to the cyclin family. Cyclin AB subfamily.

The sequence is that of Cyclin-B2-5 (CYCB2-5) from Arabidopsis thaliana (Mouse-ear cress).